A 593-amino-acid polypeptide reads, in one-letter code: Tyrosine-protein phosphatase non-receptor type 9 (593 aa).

M1 is modified (N-acetylmethionine). A disordered region spans residues 1–20 (MEPATAPRPDMAPELTPEEE). One can recognise a CRAL-TRIO domain in the interval 84–243 (EEPLRSEILS…NLGGYVKIDL (160 aa)). The Tyrosine-protein phosphatase domain maps to 303 to 574 (IYEEYEDIRR…YFCYKAILEF (272 aa)). The active-site Phosphocysteine intermediate is the C515.

This sequence belongs to the protein-tyrosine phosphatase family. Non-receptor class 3 subfamily.

It localises to the cytoplasm. It catalyses the reaction O-phospho-L-tyrosyl-[protein] + H2O = L-tyrosyl-[protein] + phosphate. Its function is as follows. Protein-tyrosine phosphatase that could participate in the transfer of hydrophobic ligands or in functions of the Golgi apparatus. In Mus musculus (Mouse), this protein is Tyrosine-protein phosphatase non-receptor type 9 (Ptpn9).